The chain runs to 332 residues: Holliday junction branch migration complex subunit RuvB (332 aa).

The tract at residues 1–181 is large ATPase domain (RuvB-L); the sequence is MTRFLDSDAM…FGITGHMEYY (181 aa). ATP is bound by residues Leu-20, Arg-21, Gly-62, Lys-65, Thr-66, Thr-67, 128–130, Arg-171, Tyr-181, and Arg-218; that span reads EDF. Thr-66 provides a ligand contact to Mg(2+). A small ATPAse domain (RuvB-S) region spans residues 182-252; that stretch reads EENDLTEIIE…ITDKALTMLD (71 aa). A head domain (RuvB-H) region spans residues 255–332; the sequence is HEGLDYVDQK…EHLGYQRFDK (78 aa). Positions 291, 310, 312, and 315 each coordinate DNA.

The protein belongs to the RuvB family. Homohexamer. Forms an RuvA(8)-RuvB(12)-Holliday junction (HJ) complex. HJ DNA is sandwiched between 2 RuvA tetramers; dsDNA enters through RuvA and exits via RuvB. An RuvB hexamer assembles on each DNA strand where it exits the tetramer. Each RuvB hexamer is contacted by two RuvA subunits (via domain III) on 2 adjacent RuvB subunits; this complex drives branch migration. In the full resolvosome a probable DNA-RuvA(4)-RuvB(12)-RuvC(2) complex forms which resolves the HJ.

The protein resides in the cytoplasm. The catalysed reaction is ATP + H2O = ADP + phosphate + H(+). Functionally, the RuvA-RuvB-RuvC complex processes Holliday junction (HJ) DNA during genetic recombination and DNA repair, while the RuvA-RuvB complex plays an important role in the rescue of blocked DNA replication forks via replication fork reversal (RFR). RuvA specifically binds to HJ cruciform DNA, conferring on it an open structure. The RuvB hexamer acts as an ATP-dependent pump, pulling dsDNA into and through the RuvAB complex. RuvB forms 2 homohexamers on either side of HJ DNA bound by 1 or 2 RuvA tetramers; 4 subunits per hexamer contact DNA at a time. Coordinated motions by a converter formed by DNA-disengaged RuvB subunits stimulates ATP hydrolysis and nucleotide exchange. Immobilization of the converter enables RuvB to convert the ATP-contained energy into a lever motion, pulling 2 nucleotides of DNA out of the RuvA tetramer per ATP hydrolyzed, thus driving DNA branch migration. The RuvB motors rotate together with the DNA substrate, which together with the progressing nucleotide cycle form the mechanistic basis for DNA recombination by continuous HJ branch migration. Branch migration allows RuvC to scan DNA until it finds its consensus sequence, where it cleaves and resolves cruciform DNA. This is Holliday junction branch migration complex subunit RuvB from Streptococcus agalactiae serotype V (strain ATCC BAA-611 / 2603 V/R).